Consider the following 143-residue polypeptide: MAKKKAISWIKLQVPAAQAAPGAKIGQALGPHGVSGPQFVKEFNERTAKMDPGIVVPVIITVYSDKSFSFIVKTPPASILIKKAIGIESGSKKSNTDKVGTISKEKLMEIARIKMSDLNAKSESAAFKIIAGSARSMGVEVEK.

The protein belongs to the universal ribosomal protein uL11 family. In terms of assembly, part of the ribosomal stalk of the 50S ribosomal subunit. Interacts with L10 and the large rRNA to form the base of the stalk. L10 forms an elongated spine to which L12 dimers bind in a sequential fashion forming a multimeric L10(L12)X complex. Post-translationally, one or more lysine residues are methylated.

Functionally, forms part of the ribosomal stalk which helps the ribosome interact with GTP-bound translation factors. The protein is Large ribosomal subunit protein uL11 of Borreliella burgdorferi (strain ATCC 35210 / DSM 4680 / CIP 102532 / B31) (Borrelia burgdorferi).